A 652-amino-acid polypeptide reads, in one-letter code: Inactive leucine-rich repeat receptor-like serine/threonine-protein kinase At1g60630 (652 aa).

Positions 1–23 (MISSSSCMFFLVFAFFLISPVRS) are cleaved as a signal peptide. The Extracellular portion of the chain corresponds to 24–256 (SDVEALLSLK…SRTKLIGIIS (233 aa)). LRR repeat units follow at residues 64 to 84 (SKLV…SLNQ), 85 to 108 (LDQL…LSGL), 109 to 132 (VNLK…LTSL), 134 to 156 (RLKT…LLRL), 158 to 178 (RLYT…PLNQ), and 179 to 203 (ATLR…ALNR). Residues Asn-72, Asn-104, and Asn-120 are each glycosylated (N-linked (GlcNAc...) asparagine). Residues Asn-185, Asn-205, and Asn-225 are each glycosylated (N-linked (GlcNAc...) asparagine). Residues 257–277 (GSICGGILILLLTFLLICLLW) traverse the membrane as a helical segment. Residues 278–652 (RRKRSKSKRE…SLPREDHMSI (375 aa)) lie on the Cytoplasmic side of the membrane. Residues 286-321 (REERRSKRVAESKEAKTAETEEGTSDQKNKRFSWEK) are disordered. In terms of domain architecture, Protein kinase spans 350–624 (KASAETLGRG…VKDARAEAAL (275 aa)). The residue at position 352 (Ser-352) is a Phosphoserine. ATP contacts are provided by residues 356–364 (LGRGTLGST) and Lys-378. Ser-430 and Ser-433 each carry phosphoserine. Thr-509 is subject to Phosphothreonine. Residues 630–652 (SDHSPGRWSDTIQSLPREDHMSI) are disordered.

The protein belongs to the protein kinase superfamily. Ser/Thr protein kinase family.

It localises to the cell membrane. In Arabidopsis thaliana (Mouse-ear cress), this protein is Inactive leucine-rich repeat receptor-like serine/threonine-protein kinase At1g60630.